The sequence spans 391 residues: DNA-directed RNA polymerase subunit Rpo1C (391 aa).

Belongs to the RNA polymerase beta' chain family. Part of the RNA polymerase complex.

It localises to the cytoplasm. The enzyme catalyses RNA(n) + a ribonucleoside 5'-triphosphate = RNA(n+1) + diphosphate. Its function is as follows. DNA-dependent RNA polymerase (RNAP) catalyzes the transcription of DNA into RNA using the four ribonucleoside triphosphates as substrates. Forms part of the jaw domain. This is DNA-directed RNA polymerase subunit Rpo1C from Thermococcus onnurineus (strain NA1).